The following is a 480-amino-acid chain: Proline--tRNA ligase (480 aa).

The protein belongs to the class-II aminoacyl-tRNA synthetase family. ProS type 3 subfamily. As to quaternary structure, homodimer.

The protein localises to the cytoplasm. The catalysed reaction is tRNA(Pro) + L-proline + ATP = L-prolyl-tRNA(Pro) + AMP + diphosphate. Its function is as follows. Catalyzes the attachment of proline to tRNA(Pro) in a two-step reaction: proline is first activated by ATP to form Pro-AMP and then transferred to the acceptor end of tRNA(Pro). The chain is Proline--tRNA ligase from Pyrococcus horikoshii (strain ATCC 700860 / DSM 12428 / JCM 9974 / NBRC 100139 / OT-3).